We begin with the raw amino-acid sequence, 670 residues long: UvrABC system protein B (670 aa).

The Helicase ATP-binding domain occupies 28 to 414 (NNFKQGLQEQ…KKIPIVEQII (387 aa)). Residue 41-48 (GATGTGKT) participates in ATP binding. The Beta-hairpin signature appears at 94 to 117 (YYDYYQPEAYVASSDTYIEKDSKI). Residues 432-594 (QMDDLYFEIK…VTPTALNKTI (163 aa)) form the Helicase C-terminal domain. The 36-residue stretch at 631-666 (NKEIKRLQKMMKEAAKTLDFEKAATLRDLILELEKK) folds into the UVR domain.

It belongs to the UvrB family. Forms a heterotetramer with UvrA during the search for lesions. Interacts with UvrC in an incision complex.

The protein resides in the cytoplasm. Its function is as follows. The UvrABC repair system catalyzes the recognition and processing of DNA lesions. A damage recognition complex composed of 2 UvrA and 2 UvrB subunits scans DNA for abnormalities. Upon binding of the UvrA(2)B(2) complex to a putative damaged site, the DNA wraps around one UvrB monomer. DNA wrap is dependent on ATP binding by UvrB and probably causes local melting of the DNA helix, facilitating insertion of UvrB beta-hairpin between the DNA strands. Then UvrB probes one DNA strand for the presence of a lesion. If a lesion is found the UvrA subunits dissociate and the UvrB-DNA preincision complex is formed. This complex is subsequently bound by UvrC and the second UvrB is released. If no lesion is found, the DNA wraps around the other UvrB subunit that will check the other stand for damage. The chain is UvrABC system protein B from Onion yellows phytoplasma (strain OY-M).